The chain runs to 330 residues: MNENLNGILNVYKEAGWTSFDVVAKLRCILKTKKIGHGGTLDPSVTGVLPIAVGKSTRLLEYMEAAGKIYEGQVTIGFSTETEDADGAIVNQTPVKNNLTESEIDSAMSRFVGKIKQIPPMYSAVKINGKKLYEYARAGQTIERPAREITIKSFVRTSPIDWNKEEGLVTFSFKVECSKGTYVRTLAVDLADSLGYAGHMSKLQRTASNGLLIKDAIKLSKIEEIQESGKLSTILYPAEYAVSDLPRVNLTTVQFDMARVGKKFAQSDWTNEVETADSSVNKTKQQEYLLTDLSLLTTEKFAAFYNDKLVAVYMKHPEKEGIWKPNKVLV.

The active-site Nucleophile is aspartate 42.

It belongs to the pseudouridine synthase TruB family. Type 1 subfamily.

It catalyses the reaction uridine(55) in tRNA = pseudouridine(55) in tRNA. In terms of biological role, responsible for synthesis of pseudouridine from uracil-55 in the psi GC loop of transfer RNAs. The chain is tRNA pseudouridine synthase B from Lactococcus lactis subsp. cremoris (strain SK11).